A 221-amino-acid chain; its full sequence is GTPase Obg (221 aa).

Residues 1 to 61 (PSALRLVLLN…LKYKLLEIVQ (61 aa)) enclose the OBG-type G domain. GTP-binding positions include 10-13 (NKAD) and 42-44 (SAV). The region spanning 82-162 (VVHRTKGQFQ…IGGISFEWEP (81 aa)) is the OCT domain.

It belongs to the TRAFAC class OBG-HflX-like GTPase superfamily. OBG GTPase family. In terms of assembly, monomer. Requires Mg(2+) as cofactor.

The protein resides in the cytoplasm. Functionally, an essential GTPase which binds GTP, GDP and possibly (p)ppGpp with moderate affinity, with high nucleotide exchange rates and a fairly low GTP hydrolysis rate. Plays a role in control of the cell cycle, stress response, ribosome biogenesis and in those bacteria that undergo differentiation, in morphogenesis control. This is GTPase Obg from Corynebacterium melassecola.